The chain runs to 228 residues: UPF0173 metal-dependent hydrolase BcerKBAB4_4442 (228 aa).

This sequence belongs to the UPF0173 family.

This Bacillus mycoides (strain KBAB4) (Bacillus weihenstephanensis) protein is UPF0173 metal-dependent hydrolase BcerKBAB4_4442.